Reading from the N-terminus, the 497-residue chain is Serine/threonine-protein phosphatase 2A 56 kDa regulatory subunit beta isoform (497 aa).

Positions 1-19 (METKLPPASTPTSPSSPGL) are enriched in low complexity. 2 disordered regions span residues 1 to 55 (METK…YQSN) and 473 to 497 (QGTQ…GGQS). 6 positions are modified to phosphoserine: S32, S35, S44, S46, S47, and S48. Basic residues predominate over residues 34–45 (RSLRRARPRRSH).

This sequence belongs to the phosphatase 2A regulatory subunit B56 family. As to quaternary structure, component of the serine/threonine-protein phosphatase 2A complex (PP2A). This complex consists of a common heterodimeric core enzyme, composed of a 36 kDa catalytic subunit (subunit C) and a 65 kDa constant scaffold subunit (PR65 or subunit A), that associates with a variety of regulatory subunits. Proteins that associate with the core dimer include three families of regulatory subunits B (the R2/B/PR55/B55, R3/B''/PR72/PR130/PR59 and R5/B'/B56 families), the 48 kDa variable regulatory subunit, viral proteins, and cell signaling molecules. Interacts with SGO1. Interacts with AKT1. In terms of processing, ubiquitinated by CUL3-KLHL15 complex; this modification leads to proteasomal degradation. In terms of tissue distribution, widely expressed at the mRNA level, with highest levels in cerebellum and lung.

It is found in the cytoplasm. Its function is as follows. As the regulatory component of the serine/threonine-protein phosphatase 2A (PP2A) holoenzyme, modulates substrate specificity, subcellular localization, and responsiveness to phosphorylation. The phosphorylated form mediates the interaction between PP2A and AKT1, leading to AKT1 dephosphorylation. The chain is Serine/threonine-protein phosphatase 2A 56 kDa regulatory subunit beta isoform (Ppp2r5b) from Rattus norvegicus (Rat).